A 129-amino-acid polypeptide reads, in one-letter code: NADPH-dependent 7-cyano-7-deazaguanine reductase (129 aa).

The Thioimide intermediate role is filled by cysteine 34. Aspartate 41 acts as the Proton donor in catalysis. Residues 56–58 and 75–76 contribute to the substrate site; these read VEL and HE.

It belongs to the GTP cyclohydrolase I family. QueF type 1 subfamily.

The protein resides in the cytoplasm. The enzyme catalyses 7-aminomethyl-7-carbaguanine + 2 NADP(+) = 7-cyano-7-deazaguanine + 2 NADPH + 3 H(+). Its pathway is tRNA modification; tRNA-queuosine biosynthesis. In terms of biological role, catalyzes the NADPH-dependent reduction of 7-cyano-7-deazaguanine (preQ0) to 7-aminomethyl-7-deazaguanine (preQ1). This is NADPH-dependent 7-cyano-7-deazaguanine reductase from Nitrosococcus oceani (strain ATCC 19707 / BCRC 17464 / JCM 30415 / NCIMB 11848 / C-107).